Consider the following 614-residue polypeptide: Major facilitator superfamily domain-containing protein 6-like protein B (614 aa).

The next 2 helical transmembrane spans lie at 41–61 and 78–98; these read LGLGASLVGIIIGFKHAVHLL and FFIMASLLLSAGAGGLFAFYP. Positions 177–191 are enriched in polar residues; that stretch reads HQRFTDQFPSSSPLT. Residues 177-243 are disordered; the sequence is HQRFTDQFPS…PFATHPNVSH (67 aa). Positions 205 to 227 are enriched in low complexity; that stretch reads GSGKAQKANSSKSSASNSKQRSS. 9 helical membrane-spanning segments follow: residues 270–290, 312–332, 345–365, 393–413, 425–445, 457–477, 480–500, 520–540, and 546–566; these read IFLIVLAMVIIWEILAAPLEW, LWIWGYLGASMGSIFITFLID, VSFHFFCYGGFLISTFFLSTL, IVLTALTVFVLGAVGSTIQNF, ELYMGLSIAAGLLSELALYFF, WMVVLGLLSLGIQFLYYSFLW, WSVVAIQILNAFSSGVIWWAI, LRWLAYGCGSSAGSFASGFII, and AVLYQACCITLLTWIVIFLLV.

Belongs to the major facilitator superfamily. MFSD6 family.

Its subcellular location is the membrane. In Xenopus laevis (African clawed frog), this protein is Major facilitator superfamily domain-containing protein 6-like protein B (mfsd6l-b).